The following is a 133-amino-acid chain: MEKTLGLHILADLYGVDFEKIDHVEDVKALLEGAVKYANLSKLSSHFHQFNPHGATGVILLEESHISIHTWPEHGYAAIDVYTCGGKEKTFKAMEYIIKTLKPKRIDEKIAERGVVPVNPEGVNIEKMQLAQV.

Ser-64 acts as the Schiff-base intermediate with substrate; via pyruvic acid in catalysis. Ser-64 carries the post-translational modification Pyruvic acid (Ser); by autocatalysis. Catalysis depends on His-69, which acts as the Proton acceptor; for processing activity. Cys-84 functions as the Proton donor; for catalytic activity in the catalytic mechanism.

This sequence belongs to the prokaryotic AdoMetDC family. Type 1 subfamily. In terms of assembly, heterotetramer of two alpha and two beta chains arranged as a dimer of alpha/beta heterodimers. It depends on pyruvate as a cofactor. Post-translationally, is synthesized initially as an inactive proenzyme. Formation of the active enzyme involves a self-maturation process in which the active site pyruvoyl group is generated from an internal serine residue via an autocatalytic post-translational modification. Two non-identical subunits are generated from the proenzyme in this reaction, and the pyruvate is formed at the N-terminus of the alpha chain, which is derived from the carboxyl end of the proenzyme. The post-translation cleavage follows an unusual pathway, termed non-hydrolytic serinolysis, in which the side chain hydroxyl group of the serine supplies its oxygen atom to form the C-terminus of the beta chain, while the remainder of the serine residue undergoes an oxidative deamination to produce ammonia and the pyruvoyl group blocking the N-terminus of the alpha chain.

The catalysed reaction is S-adenosyl-L-methionine + H(+) = S-adenosyl 3-(methylsulfanyl)propylamine + CO2. It participates in amine and polyamine biosynthesis; S-adenosylmethioninamine biosynthesis; S-adenosylmethioninamine from S-adenosyl-L-methionine: step 1/1. Its function is as follows. Catalyzes the decarboxylation of S-adenosylmethionine to S-adenosylmethioninamine (dcAdoMet), the propylamine donor required for the synthesis of the polyamines spermine and spermidine from the diamine putrescine. In Sulfurihydrogenibium sp. (strain YO3AOP1), this protein is S-adenosylmethionine decarboxylase proenzyme.